The sequence spans 431 residues: Probable prephenate dehydrogenase [NADP(+)] (431 aa).

5–34 (FQVGIIGFGDMGRLYAEYISKAGWRVNVCD) is a binding site for NADP(+). The Prephenate/arogenate dehydrogenase domain occupies 5-285 (FQVGIIGFGD…GENMDRNSSG (281 aa)).

It belongs to the prephenate/arogenate dehydrogenase family.

The protein localises to the cytoplasm. It catalyses the reaction prephenate + NADP(+) = 3-(4-hydroxyphenyl)pyruvate + CO2 + NADPH. The protein operates within amino-acid biosynthesis; L-tyrosine biosynthesis; (4-hydroxyphenyl)pyruvate from prephenate (NADP(+) route): step 1/1. This Schizosaccharomyces pombe (strain 972 / ATCC 24843) (Fission yeast) protein is Probable prephenate dehydrogenase [NADP(+)] (tyr1).